Reading from the N-terminus, the 209-residue chain is Protein-L-isoaspartate O-methyltransferase (209 aa).

Residue Ser60 is part of the active site.

This sequence belongs to the methyltransferase superfamily. L-isoaspartyl/D-aspartyl protein methyltransferase family.

Its subcellular location is the cytoplasm. The catalysed reaction is [protein]-L-isoaspartate + S-adenosyl-L-methionine = [protein]-L-isoaspartate alpha-methyl ester + S-adenosyl-L-homocysteine. In terms of biological role, catalyzes the methyl esterification of L-isoaspartyl residues in peptides and proteins that result from spontaneous decomposition of normal L-aspartyl and L-asparaginyl residues. It plays a role in the repair and/or degradation of damaged proteins. This Methanococcus vannielii (strain ATCC 35089 / DSM 1224 / JCM 13029 / OCM 148 / SB) protein is Protein-L-isoaspartate O-methyltransferase.